The chain runs to 323 residues: Probable oxidoreductase patJ (323 aa).

The tract at residues 291-323 is disordered; that stretch reads DQSANGVNGHATGVEAKKKQLGDMTRRRSGAQE. A compositionally biased stretch (basic and acidic residues) spans 305–316; it reads EAKKKQLGDMTR.

The protein belongs to the oxidoreductase OpS7 family.

Its subcellular location is the vacuole lumen. The protein localises to the cytoplasmic vesicle lumen. It functions in the pathway mycotoxin biosynthesis; patulin biosynthesis. In terms of biological role, probable oxidoreductase; part of the gene cluster that mediates the biosynthesis of patulin, an acetate-derived tetraketide mycotoxin produced by several fungal species that shows antimicrobial properties against several bacteria. PatJ acts with patO in the vacuole to convert gentisyl alcohol to isoepoxydon. The pathway begins with the synthesis of 6-methylsalicylic acid by the polyketide synthase (PKS) patK via condensation of acetate and malonate units. The 6-methylsalicylic acid decarboxylase patG then catalyzes the decarboxylation of 6-methylsalicylic acid to yield m-cresol (also known as 3-methylphenol). These first reactions occur in the cytosol. The intermediate m-cresol is then transported into the endoplasmic reticulum where the cytochrome P450 monooxygenase patH converts it to m-hydroxybenzyl alcohol, which is further converted to gentisyl alcohol by the cytochrome P450 monooxygenase patI. The oxidoreductases patJ and patO further convert gentisyl alcohol to isoepoxydon in the vacuole. PatN catalyzes then the transformation of isoepoxydon into phyllostine. The cluster protein patF is responsible for the conversion from phyllostine to neopatulin whereas the alcohol dehydrogenase patD converts neopatulin to E-ascladiol. The steps between isoepoxydon and E-ascladiol occur in the cytosol, and E-ascladiol is probably secreted to the extracellular space by one of the cluster-specific transporters patC or patM. Finally, the secreted patulin synthase patE catalyzes the conversion of E-ascladiol to patulin. This chain is Probable oxidoreductase patJ, found in Aspergillus clavatus (strain ATCC 1007 / CBS 513.65 / DSM 816 / NCTC 3887 / NRRL 1 / QM 1276 / 107).